Consider the following 90-residue polypeptide: Acylphosphatase (90 aa).

Positions 3 to 90 (AVTLKATGRV…QNYHDFRITN (88 aa)) constitute an Acylphosphatase-like domain. Active-site residues include R18 and N36.

Belongs to the acylphosphatase family.

It catalyses the reaction an acyl phosphate + H2O = a carboxylate + phosphate + H(+). The chain is Acylphosphatase (acyP) from Lactiplantibacillus plantarum (strain ATCC BAA-793 / NCIMB 8826 / WCFS1) (Lactobacillus plantarum).